Reading from the N-terminus, the 88-residue chain is Putative membrane protein insertion efficiency factor (88 aa).

Belongs to the UPF0161 family.

It localises to the cell inner membrane. Functionally, could be involved in insertion of integral membrane proteins into the membrane. The sequence is that of Putative membrane protein insertion efficiency factor from Rickettsia canadensis (strain McKiel).